The sequence spans 709 residues: Phosphomethylpyrimidine synthase (709 aa).

Over residues 1-13 the composition is skewed to polar residues; it reads MNIRSNPDTTLPA. Disordered regions lie at residues 1-21 and 125-168; these read MNIR…PLPS and DAPA…GREQ. Substrate-binding positions include N274, M303, Y332, H368, 388 to 390, 429 to 432, and E468; these read SRG and DGLR. H472 contacts Zn(2+). Y495 serves as a coordination point for substrate. H536 is a Zn(2+) binding site. The [4Fe-4S] cluster site is built by C616, C619, and C624.

Belongs to the ThiC family. In terms of assembly, homodimer. Requires [4Fe-4S] cluster as cofactor.

It catalyses the reaction 5-amino-1-(5-phospho-beta-D-ribosyl)imidazole + S-adenosyl-L-methionine = 4-amino-2-methyl-5-(phosphooxymethyl)pyrimidine + CO + 5'-deoxyadenosine + formate + L-methionine + 3 H(+). The protein operates within cofactor biosynthesis; thiamine diphosphate biosynthesis. In terms of biological role, catalyzes the synthesis of the hydroxymethylpyrimidine phosphate (HMP-P) moiety of thiamine from aminoimidazole ribotide (AIR) in a radical S-adenosyl-L-methionine (SAM)-dependent reaction. The sequence is that of Phosphomethylpyrimidine synthase from Rhodopseudomonas palustris (strain BisB18).